Reading from the N-terminus, the 429-residue chain is MENYTVQPAKSVRGEISVPGDKSISHRSIMFGSISSGVTKVTGFLRGEDALATLQAFRAMGVQIDDDGETVTIQGRGLHGLSEPTDVLDCGNSGTSMRLLTGLLAGQNFFSVLSGDKYLRARPMKRVVGPLALMGARISGRAGGEKAPLAIQGSKLIGIEYDSPVSSAQVKSAIMLAGLYAGGETVVREPHLSRDHSERMLRAFGAHVETFPGGVKVRGGAELTGRDIVVPGDISSAAFFLVAALIVPGSDLLIRGVGVNPTRTGIIDVLKGMGGDLELTNQRDESGEPVADIRVRHSKLTAMEICGEVVPRAIDEFPAICVAASLAQGTTVVRDAAELRVKETDRISAMADNLRRAGVNIVETPDGMQITGVASLKGCAADSFGDHRIAMSMMVAGLVAQGETSVSDVECIATSFPGFVNLLDGVVQR.

The 3-phosphoshikimate site is built by Lys22, Ser23, and Arg27. Residue Lys22 participates in phosphoenolpyruvate binding. Residues Gly94 and Arg122 each coordinate phosphoenolpyruvate. Ser167, Gln169, Asp315, and Lys342 together coordinate 3-phosphoshikimate. Residue Gln169 participates in phosphoenolpyruvate binding. Asp315 (proton acceptor) is an active-site residue. Residues Arg346 and Arg388 each contribute to the phosphoenolpyruvate site.

It belongs to the EPSP synthase family. Monomer.

The protein resides in the cytoplasm. The enzyme catalyses 3-phosphoshikimate + phosphoenolpyruvate = 5-O-(1-carboxyvinyl)-3-phosphoshikimate + phosphate. Its pathway is metabolic intermediate biosynthesis; chorismate biosynthesis; chorismate from D-erythrose 4-phosphate and phosphoenolpyruvate: step 6/7. Catalyzes the transfer of the enolpyruvyl moiety of phosphoenolpyruvate (PEP) to the 5-hydroxyl of shikimate-3-phosphate (S3P) to produce enolpyruvyl shikimate-3-phosphate and inorganic phosphate. This is 3-phosphoshikimate 1-carboxyvinyltransferase from Geobacter sp. (strain M21).